The chain runs to 59 residues: Transcription elongation factor Spt4 (59 aa).

C4, C7, C16, and C19 together coordinate Zn(2+).

The protein belongs to the archaeal Spt4 family. Heterodimer composed of Spt4 and Spt5.

In terms of biological role, stimulates transcription elongation. The polypeptide is Transcription elongation factor Spt4 (Methanocaldococcus jannaschii (strain ATCC 43067 / DSM 2661 / JAL-1 / JCM 10045 / NBRC 100440) (Methanococcus jannaschii)).